The primary structure comprises 872 residues: Alanine--tRNA ligase (872 aa).

Positions 567, 571, 669, and 673 each coordinate Zn(2+).

This sequence belongs to the class-II aminoacyl-tRNA synthetase family. The cofactor is Zn(2+).

It localises to the cytoplasm. It catalyses the reaction tRNA(Ala) + L-alanine + ATP = L-alanyl-tRNA(Ala) + AMP + diphosphate. Catalyzes the attachment of alanine to tRNA(Ala) in a two-step reaction: alanine is first activated by ATP to form Ala-AMP and then transferred to the acceptor end of tRNA(Ala). Also edits incorrectly charged Ser-tRNA(Ala) and Gly-tRNA(Ala) via its editing domain. This is Alanine--tRNA ligase from Streptococcus pneumoniae serotype 2 (strain D39 / NCTC 7466).